The sequence spans 383 residues: ATP phosphoribosyltransferase regulatory subunit (383 aa).

This sequence belongs to the class-II aminoacyl-tRNA synthetase family. HisZ subfamily. As to quaternary structure, heteromultimer composed of HisG and HisZ subunits.

The protein resides in the cytoplasm. Its pathway is amino-acid biosynthesis; L-histidine biosynthesis; L-histidine from 5-phospho-alpha-D-ribose 1-diphosphate: step 1/9. Functionally, required for the first step of histidine biosynthesis. May allow the feedback regulation of ATP phosphoribosyltransferase activity by histidine. The polypeptide is ATP phosphoribosyltransferase regulatory subunit (Paraburkholderia phymatum (strain DSM 17167 / CIP 108236 / LMG 21445 / STM815) (Burkholderia phymatum)).